A 436-amino-acid chain; its full sequence is Xylose isomerase (436 aa).

Mg(2+)-binding residues include D306 and D308.

Belongs to the xylose isomerase family. As to quaternary structure, homotetramer. It depends on Mg(2+) as a cofactor.

The protein resides in the cytoplasm. The enzyme catalyses alpha-D-xylose = alpha-D-xylulofuranose. The sequence is that of Xylose isomerase from Rhizobium rhizogenes (strain K84 / ATCC BAA-868) (Agrobacterium radiobacter).